Consider the following 183-residue polypeptide: Large ribosomal subunit protein uL5 (183 aa).

This sequence belongs to the universal ribosomal protein uL5 family. In terms of assembly, part of the 50S ribosomal subunit; part of the 5S rRNA/L5/L18/L25 subcomplex. Contacts the 5S rRNA and the P site tRNA. Forms a bridge to the 30S subunit in the 70S ribosome.

Functionally, this is one of the proteins that bind and probably mediate the attachment of the 5S RNA into the large ribosomal subunit, where it forms part of the central protuberance. In the 70S ribosome it contacts protein S13 of the 30S subunit (bridge B1b), connecting the 2 subunits; this bridge is implicated in subunit movement. Contacts the P site tRNA; the 5S rRNA and some of its associated proteins might help stabilize positioning of ribosome-bound tRNAs. The chain is Large ribosomal subunit protein uL5 from Pseudothermotoga lettingae (strain ATCC BAA-301 / DSM 14385 / NBRC 107922 / TMO) (Thermotoga lettingae).